A 105-amino-acid polypeptide reads, in one-letter code: Ribosomal silencing factor RsfS (105 aa).

This sequence belongs to the Iojap/RsfS family. As to quaternary structure, interacts with ribosomal protein uL14 (rplN).

The protein localises to the cytoplasm. Its function is as follows. Functions as a ribosomal silencing factor. Interacts with ribosomal protein uL14 (rplN), blocking formation of intersubunit bridge B8. Prevents association of the 30S and 50S ribosomal subunits and the formation of functional ribosomes, thus repressing translation. This chain is Ribosomal silencing factor RsfS, found in Escherichia coli O6:H1 (strain CFT073 / ATCC 700928 / UPEC).